A 289-amino-acid chain; its full sequence is tRNA(Ile)-lysidine synthase (289 aa).

Ser11–Ser16 is an ATP binding site.

It belongs to the tRNA(Ile)-lysidine synthase family.

It is found in the cytoplasm. It catalyses the reaction cytidine(34) in tRNA(Ile2) + L-lysine + ATP = lysidine(34) in tRNA(Ile2) + AMP + diphosphate + H(+). Functionally, ligates lysine onto the cytidine present at position 34 of the AUA codon-specific tRNA(Ile) that contains the anticodon CAU, in an ATP-dependent manner. Cytidine is converted to lysidine, thus changing the amino acid specificity of the tRNA from methionine to isoleucine. In Mycoplasma pneumoniae (strain ATCC 29342 / M129 / Subtype 1) (Mycoplasmoides pneumoniae), this protein is tRNA(Ile)-lysidine synthase.